The primary structure comprises 147 residues: MAGKKAPNGLFAARKLRRKRLKFRWSQREFKIKMLGLKKKHDPLEGAPMARGIVLEKVGVEARQPNSAVRKCVRVQLAKNGKVVTAFVPFDGGINYIDEHDEVIIEGIGGPRGRSMGDIPGVRYKVIMVNGVSLKALYLGKKQKPVR.

It belongs to the universal ribosomal protein uS12 family. As to quaternary structure, part of the 30S ribosomal subunit.

Functionally, with S4 and S5 plays an important role in translational accuracy. Located at the interface of the 30S and 50S subunits. In Staphylothermus marinus (strain ATCC 43588 / DSM 3639 / JCM 9404 / F1), this protein is Small ribosomal subunit protein uS12.